The primary structure comprises 365 residues: MNTLGRFLRLTTFGESHGDMIGGVLDGMPSGIKIDYDLLENEMKRRQGGRNIFTTPRKEDDKVEITSGVFEGFSAGTPIGFLIHNQRARSKDYDNIKNLFRPSHADFTYFHKYGIRDFRGGGRSSARESAIRVAAGAFAKMLLREIGVVCESGIIKIGGIEAKNYDFNHALKSEIFALDKEQEEAQKTAIQNAIKNHDSIGGVALIRARGAKTNQKLPIGLGQGLYAKLDAKIAEAMMGLNGVKAVEIGKGVESSLLKGSEYNDLMSQKGFLSNHSGGVLGGMSNGEEIIVKVHFKPTPSIFQPQRTIDIKGNECECLLKGRHDPCIAIRGSVVCESLLSLVLADMVLLNLTSKIEYLKTIYNEN.

An NADP(+)-binding site is contributed by arginine 46. Residues 123-125 (RSS), 241-242 (NG), glycine 281, 296-300 (KPTPS), and arginine 322 each bind FMN.

It belongs to the chorismate synthase family. Homotetramer. FMNH2 is required as a cofactor.

The catalysed reaction is 5-O-(1-carboxyvinyl)-3-phosphoshikimate = chorismate + phosphate. Its pathway is metabolic intermediate biosynthesis; chorismate biosynthesis; chorismate from D-erythrose 4-phosphate and phosphoenolpyruvate: step 7/7. In terms of biological role, catalyzes the anti-1,4-elimination of the C-3 phosphate and the C-6 proR hydrogen from 5-enolpyruvylshikimate-3-phosphate (EPSP) to yield chorismate, which is the branch point compound that serves as the starting substrate for the three terminal pathways of aromatic amino acid biosynthesis. This reaction introduces a second double bond into the aromatic ring system. The chain is Chorismate synthase from Helicobacter pylori (strain J99 / ATCC 700824) (Campylobacter pylori J99).